Consider the following 324-residue polypeptide: Putative S-adenosyl-L-methionine-dependent methyltransferase MUL_0818 (324 aa).

Residues Asp138 and 167–168 (DL) contribute to the S-adenosyl-L-methionine site.

Belongs to the UPF0677 family.

Exhibits S-adenosyl-L-methionine-dependent methyltransferase activity. In Mycobacterium ulcerans (strain Agy99), this protein is Putative S-adenosyl-L-methionine-dependent methyltransferase MUL_0818.